The chain runs to 441 residues: ATP-dependent protease ATPase subunit HslU (441 aa).

ATP contacts are provided by residues I18 and 60–65 (GVGKTE). Positions 131-158 (ILDALLPRPRGSEYDHARDESSTRQTFR) are disordered. Basic and acidic residues predominate over residues 140 to 152 (RGSEYDHARDESS). Residues D254, E320, and R392 each contribute to the ATP site.

This sequence belongs to the ClpX chaperone family. HslU subfamily. As to quaternary structure, a double ring-shaped homohexamer of HslV is capped on each side by a ring-shaped HslU homohexamer. The assembly of the HslU/HslV complex is dependent on binding of ATP.

It is found in the cytoplasm. ATPase subunit of a proteasome-like degradation complex; this subunit has chaperone activity. The binding of ATP and its subsequent hydrolysis by HslU are essential for unfolding of protein substrates subsequently hydrolyzed by HslV. HslU recognizes the N-terminal part of its protein substrates and unfolds these before they are guided to HslV for hydrolysis. This Chromohalobacter salexigens (strain ATCC BAA-138 / DSM 3043 / CIP 106854 / NCIMB 13768 / 1H11) protein is ATP-dependent protease ATPase subunit HslU.